Reading from the N-terminus, the 82-residue chain is Protein WFDC11 (82 aa).

Positions 1-21 (MKPSWFPCLVFLCMLLLSALG) are cleaved as a signal peptide.

The protein localises to the secreted. The chain is Protein WFDC11 (Wfdc11) from Mus musculus (Mouse).